Consider the following 505-residue polypeptide: Phosphomevalonate kinase, peroxisomal (505 aa).

Residue Ala-2 is modified to N-acetylalanine. The Peroxisomal targeting signal PTS2 signature appears at 57-65; sequence DVKLTSPQL. Residue 177 to 187 participates in ATP binding; sequence VAKTGLGSSAA.

Belongs to the GHMP kinase family. Mevalonate kinase subfamily.

The protein localises to the peroxisome. It carries out the reaction (R)-5-phosphomevalonate + ATP = (R)-5-diphosphomevalonate + ADP. The protein operates within isoprenoid biosynthesis; isopentenyl diphosphate biosynthesis via mevalonate pathway; isopentenyl diphosphate from (R)-mevalonate: step 2/3. The chain is Phosphomevalonate kinase, peroxisomal from Arabidopsis thaliana (Mouse-ear cress).